Here is a 124-residue protein sequence, read N- to C-terminus: Holo-[acyl-carrier-protein] synthase (124 aa).

Mg(2+) is bound by residues aspartate 5 and glutamate 51.

It belongs to the P-Pant transferase superfamily. AcpS family. The cofactor is Mg(2+).

The protein resides in the cytoplasm. The catalysed reaction is apo-[ACP] + CoA = holo-[ACP] + adenosine 3',5'-bisphosphate + H(+). Its function is as follows. Transfers the 4'-phosphopantetheine moiety from coenzyme A to a Ser of acyl-carrier-protein. This chain is Holo-[acyl-carrier-protein] synthase, found in Hydrogenobaculum sp. (strain Y04AAS1).